Consider the following 304-residue polypeptide: Cell division protein ZipA (304 aa).

At 1 to 5 (MQDLR) the chain is on the periplasmic side. The helical transmembrane segment at 6–26 (LILIVVGAIAIIALLLHGLWT) threads the bilayer. At 27–304 (SRKERSSVFR…IRDVIDANSH (278 aa)) the chain is on the cytoplasmic side. Positions 31 to 165 (RSSVFRDRPH…PEPQSQPKQK (135 aa)) are disordered. Residues 121–132 (ARPETHKPDQPE) show a composition bias toward basic and acidic residues. A compositionally biased stretch (low complexity) spans 137–158 (AAPAAAETAPAPAEPAQKTPEP).

The protein belongs to the ZipA family. Interacts with FtsZ via their C-terminal domains.

It localises to the cell inner membrane. Essential cell division protein that stabilizes the FtsZ protofilaments by cross-linking them and that serves as a cytoplasmic membrane anchor for the Z ring. Also required for the recruitment to the septal ring of downstream cell division proteins. The chain is Cell division protein ZipA from Erwinia tasmaniensis (strain DSM 17950 / CFBP 7177 / CIP 109463 / NCPPB 4357 / Et1/99).